A 480-amino-acid polypeptide reads, in one-letter code: NADH-quinone oxidoreductase subunit N (480 aa).

Transmembrane regions (helical) follow at residues 5–25, 40–60, 69–89, 110–130, 162–182, 204–224, 237–257, 266–286, 296–316, 324–344, 368–388, 404–424, and 450–470; these read NFLCIEQELKLIALLVILFLY, IAIVGFAIVIISEFPPYFTMY, ISSQLTFFMKSILNVATFLVF, VIMLISLLGMYFMISAENFVM, YILTSALSSGVMLFGLSFLYG, LGFVFFFGGLGFKLSLVPFHL, VTAYLSVVSKGAATFALIFVL, LIWNNILCWLLLATIVLGNLF, FFAFSSISQAGYILLGIIAGT, IFYTLVYLFSNLAAFGVIASV, AFVMMLAVFSLGGIPPFAGFF, ILVFIALLNTVMSLYYYLLIV, and MVICTIGIFVIGFLSAIYEYI.

Belongs to the complex I subunit 2 family. NDH-1 is composed of 14 different subunits. Subunits NuoA, H, J, K, L, M, N constitute the membrane sector of the complex.

The protein resides in the cell inner membrane. It catalyses the reaction a quinone + NADH + 5 H(+)(in) = a quinol + NAD(+) + 4 H(+)(out). NDH-1 shuttles electrons from NADH, via FMN and iron-sulfur (Fe-S) centers, to quinones in the respiratory chain. The immediate electron acceptor for the enzyme in this species is believed to be a menaquinone. Couples the redox reaction to proton translocation (for every two electrons transferred, four hydrogen ions are translocated across the cytoplasmic membrane), and thus conserves the redox energy in a proton gradient. This is NADH-quinone oxidoreductase subunit N from Azobacteroides pseudotrichonymphae genomovar. CFP2.